The chain runs to 264 residues: Phycocyanobilin:ferredoxin oxidoreductase (264 aa).

This sequence belongs to the HY2 family.

The enzyme catalyses (2R,3Z)-phycocyanobilin + 4 oxidized [2Fe-2S]-[ferredoxin] = biliverdin IXalpha + 4 reduced [2Fe-2S]-[ferredoxin] + 4 H(+). Functionally, catalyzes the four-electron reduction of biliverdin IX-alpha (2-electron reduction at both the A and D rings); the reaction proceeds via an isolatable 2-electron intermediate, 181,182-dihydrobiliverdin. This Prochlorococcus marinus (strain MIT 9313) protein is Phycocyanobilin:ferredoxin oxidoreductase (pcyA).